The following is a 281-amino-acid chain: Lipoyl synthase (281 aa).

Residues Cys-35, Cys-40, Cys-46, Cys-61, Cys-65, Cys-68, and Ser-274 each contribute to the [4Fe-4S] cluster site. The Radical SAM core domain occupies 47–263 (FGCGQATFLI…RDEALALGFR (217 aa)).

It belongs to the radical SAM superfamily. Lipoyl synthase family. [4Fe-4S] cluster is required as a cofactor.

Its subcellular location is the cytoplasm. It carries out the reaction [[Fe-S] cluster scaffold protein carrying a second [4Fe-4S](2+) cluster] + N(6)-octanoyl-L-lysyl-[protein] + 2 oxidized [2Fe-2S]-[ferredoxin] + 2 S-adenosyl-L-methionine + 4 H(+) = [[Fe-S] cluster scaffold protein] + N(6)-[(R)-dihydrolipoyl]-L-lysyl-[protein] + 4 Fe(3+) + 2 hydrogen sulfide + 2 5'-deoxyadenosine + 2 L-methionine + 2 reduced [2Fe-2S]-[ferredoxin]. The protein operates within protein modification; protein lipoylation via endogenous pathway; protein N(6)-(lipoyl)lysine from octanoyl-[acyl-carrier-protein]: step 2/2. Functionally, catalyzes the radical-mediated insertion of two sulfur atoms into the C-6 and C-8 positions of the octanoyl moiety bound to the lipoyl domains of lipoate-dependent enzymes, thereby converting the octanoylated domains into lipoylated derivatives. This chain is Lipoyl synthase, found in Trichlorobacter lovleyi (strain ATCC BAA-1151 / DSM 17278 / SZ) (Geobacter lovleyi).